The primary structure comprises 1556 residues: Pentafunctional AROM polypeptide (1556 aa).

The tract at residues 1–387 (MFAEGQIQKV…HEQKASSVAD (387 aa)) is 3-dehydroquinate synthase. NAD(+) contacts are provided by residues 46-48 (DTN), 84-87 (ETSK), 115-117 (GGV), and D120. R131 provides a ligand contact to 7-phospho-2-dehydro-3-deoxy-D-arabino-heptonate. 140 to 141 (TT) contacts NAD(+). The 7-phospho-2-dehydro-3-deoxy-D-arabino-heptonate site is built by D147 and K153. K162 is a binding site for NAD(+). N163 lines the 7-phospho-2-dehydro-3-deoxy-D-arabino-heptonate pocket. NAD(+) is bound by residues 180-183 (FLET) and N191. Residue E195 participates in Zn(2+) binding. Residues 195-198 (EVIK) and K253 contribute to the 7-phospho-2-dehydro-3-deoxy-D-arabino-heptonate site. E263 acts as the Proton acceptor; for 3-dehydroquinate synthase activity in catalysis. Residues 267 to 271 (RNLLN) and H274 contribute to the 7-phospho-2-dehydro-3-deoxy-D-arabino-heptonate site. H274 is a Zn(2+) binding site. H278 serves as the catalytic Proton acceptor; for 3-dehydroquinate synthase activity. 7-phospho-2-dehydro-3-deoxy-D-arabino-heptonate contacts are provided by H290 and K359. H290 contacts Zn(2+). Positions 400-837 (VGEAPVGDKK…WDVLSGVFNV (438 aa)) are EPSP synthase. The active-site For EPSP synthase activity is the C819. Positions 858–1049 (PSIFIVGMRG…HKDQFTSFLS (192 aa)) are shikimate kinase. Position 864–871 (864–871 (GMRGAGKT)) interacts with ATP. The segment at 1050–1266 (LTFPDVSIAA…AAPGQLSVEE (217 aa)) is 3-dehydroquinase. H1171 (proton acceptor; for 3-dehydroquinate dehydratase activity) is an active-site residue. The active-site Schiff-base intermediate with substrate; for 3-dehydroquinate dehydratase activity is the K1200. Residues 1279–1556 (KNLSFFIVGT…EVGEKAVLGN (278 aa)) are shikimate dehydrogenase.

The protein in the N-terminal section; belongs to the sugar phosphate cyclases superfamily. Dehydroquinate synthase family. This sequence in the 2nd section; belongs to the EPSP synthase family. It in the 3rd section; belongs to the shikimate kinase family. In the 4th section; belongs to the type-I 3-dehydroquinase family. The protein in the C-terminal section; belongs to the shikimate dehydrogenase family. In terms of assembly, homodimer. The cofactor is Zn(2+).

It is found in the cytoplasm. The catalysed reaction is 7-phospho-2-dehydro-3-deoxy-D-arabino-heptonate = 3-dehydroquinate + phosphate. It carries out the reaction 3-dehydroquinate = 3-dehydroshikimate + H2O. It catalyses the reaction shikimate + NADP(+) = 3-dehydroshikimate + NADPH + H(+). The enzyme catalyses shikimate + ATP = 3-phosphoshikimate + ADP + H(+). The catalysed reaction is 3-phosphoshikimate + phosphoenolpyruvate = 5-O-(1-carboxyvinyl)-3-phosphoshikimate + phosphate. Its pathway is metabolic intermediate biosynthesis; chorismate biosynthesis; chorismate from D-erythrose 4-phosphate and phosphoenolpyruvate: step 2/7. It functions in the pathway metabolic intermediate biosynthesis; chorismate biosynthesis; chorismate from D-erythrose 4-phosphate and phosphoenolpyruvate: step 3/7. The protein operates within metabolic intermediate biosynthesis; chorismate biosynthesis; chorismate from D-erythrose 4-phosphate and phosphoenolpyruvate: step 4/7. It participates in metabolic intermediate biosynthesis; chorismate biosynthesis; chorismate from D-erythrose 4-phosphate and phosphoenolpyruvate: step 5/7. Its pathway is metabolic intermediate biosynthesis; chorismate biosynthesis; chorismate from D-erythrose 4-phosphate and phosphoenolpyruvate: step 6/7. In terms of biological role, the AROM polypeptide catalyzes 5 consecutive enzymatic reactions in prechorismate polyaromatic amino acid biosynthesis. This is Pentafunctional AROM polypeptide from Yarrowia lipolytica (strain CLIB 122 / E 150) (Yeast).